The primary structure comprises 190 residues: RNA pyrophosphohydrolase (190 aa).

In terms of domain architecture, Nudix hydrolase spans 6–149; sequence GYRPNVGIVL…KRGVYARALC (144 aa). Residues 38–59 carry the Nudix box motif; that stretch reads GGMHSDETPVEAMYRELNEETG.

The protein belongs to the Nudix hydrolase family. RppH subfamily. Requires a divalent metal cation as cofactor.

Functionally, accelerates the degradation of transcripts by removing pyrophosphate from the 5'-end of triphosphorylated RNA, leading to a more labile monophosphorylated state that can stimulate subsequent ribonuclease cleavage. In Xylella fastidiosa (strain 9a5c), this protein is RNA pyrophosphohydrolase.